A 667-amino-acid chain; its full sequence is Beta-galactosidase LacZ (667 aa).

Position 109 (R109) interacts with substrate. Position 113 (C113) interacts with Zn(2+). N147 contacts substrate. E148 serves as the catalytic Proton donor. Residues C153, C155, and C158 each contribute to the Zn(2+) site. Residue E307 is the Nucleophile of the active site. Residues W315 and 355 to 358 (EKFH) each bind substrate.

This sequence belongs to the glycosyl hydrolase 42 family.

It carries out the reaction Hydrolysis of terminal non-reducing beta-D-galactose residues in beta-D-galactosides.. In terms of biological role, catalyzes the hydrolysis of lactose to its constituent monosaccharides glucose and galactose. The protein is Beta-galactosidase LacZ of Lactobacillus acidophilus (strain ATCC 700396 / NCK56 / N2 / NCFM).